Reading from the N-terminus, the 255-residue chain is Pimeloyl-[acyl-carrier protein] methyl ester esterase (255 aa).

Residues 16 to 242 form the AB hydrolase-1 domain; that stretch reads LVLLHGWGLN…AAHAPFISHP (227 aa). Substrate contacts are provided by residues Trp22, 82–83, and 143–147; these read SL and FLALQ. Ser82 serves as the catalytic Nucleophile. Active-site residues include Asp207 and His235. His235 provides a ligand contact to substrate.

Belongs to the AB hydrolase superfamily. Carboxylesterase BioH family. Monomer.

Its subcellular location is the cytoplasm. The catalysed reaction is 6-carboxyhexanoyl-[ACP] methyl ester + H2O = 6-carboxyhexanoyl-[ACP] + methanol + H(+). It functions in the pathway cofactor biosynthesis; biotin biosynthesis. Its function is as follows. The physiological role of BioH is to remove the methyl group introduced by BioC when the pimeloyl moiety is complete. It allows to synthesize pimeloyl-ACP via the fatty acid synthetic pathway through the hydrolysis of the ester bonds of pimeloyl-ACP esters. This chain is Pimeloyl-[acyl-carrier protein] methyl ester esterase, found in Pectobacterium atrosepticum (strain SCRI 1043 / ATCC BAA-672) (Erwinia carotovora subsp. atroseptica).